A 315-amino-acid polypeptide reads, in one-letter code: UDP-N-acetylenolpyruvoylglucosamine reductase (315 aa).

The region spanning 27-207 is the FAD-binding PCMH-type domain; the sequence is RVGGPADVLY…TKRMNAITAR (181 aa). Arg-172 is a catalytic residue. Residues 214-236 form a disordered region; that stretch reads IREKTSGSTFANPDPPGTPNQRK. Ser-221 (proton donor) is an active-site residue. The active site involves Glu-297.

The protein belongs to the MurB family. Requires FAD as cofactor.

The protein resides in the cytoplasm. The catalysed reaction is UDP-N-acetyl-alpha-D-muramate + NADP(+) = UDP-N-acetyl-3-O-(1-carboxyvinyl)-alpha-D-glucosamine + NADPH + H(+). It participates in cell wall biogenesis; peptidoglycan biosynthesis. Its function is as follows. Cell wall formation. The sequence is that of UDP-N-acetylenolpyruvoylglucosamine reductase from Maricaulis maris (strain MCS10) (Caulobacter maris).